We begin with the raw amino-acid sequence, 248 residues long: Small ribosomal subunit protein eS6 (248 aa).

The segment at valine 215 to lysine 248 is disordered. Residues alanine 223 to lysine 248 are compositionally biased toward basic and acidic residues. Phosphoserine occurs at positions 233, 235, 239, 242, 244, and 245.

It belongs to the eukaryotic ribosomal protein eS6 family. As to quaternary structure, component of the small ribosomal subunit. Part of the small subunit (SSU) processome, composed of more than 70 proteins and the RNA chaperone small nucleolar RNA (snoRNA) U3. Post-translationally, ribosomal protein S6 is the major substrate of protein kinases in eukaryote ribosomes. The phosphorylation is stimulated by growth factors, tumor promoting agents, and mitogens. It is dephosphorylated at growth arrest.

The protein resides in the cytoplasm. Its subcellular location is the nucleus. It is found in the nucleolus. Its function is as follows. Component of the 40S small ribosomal subunit. Plays an important role in controlling cell growth and proliferation through the selective translation of particular classes of mRNA. Part of the small subunit (SSU) processome, first precursor of the small eukaryotic ribosomal subunit. During the assembly of the SSU processome in the nucleolus, many ribosome biogenesis factors, an RNA chaperone and ribosomal proteins associate with the nascent pre-rRNA and work in concert to generate RNA folding, modifications, rearrangements and cleavage as well as targeted degradation of pre-ribosomal RNA by the RNA exosome. The polypeptide is Small ribosomal subunit protein eS6 (RpS6) (Drosophila melanogaster (Fruit fly)).